The primary structure comprises 405 residues: 3-hydroxy-3-methylglutaryl-coenzyme A reductase (405 aa).

Active-site charge relay system residues include glutamate 100 and aspartate 310. Histidine 400 functions as the Proton donor in the catalytic mechanism.

It belongs to the HMG-CoA reductase family.

The enzyme catalyses (R)-mevalonate + 2 NADP(+) + CoA = (3S)-3-hydroxy-3-methylglutaryl-CoA + 2 NADPH + 2 H(+). It functions in the pathway metabolic intermediate biosynthesis; (R)-mevalonate biosynthesis; (R)-mevalonate from acetyl-CoA: step 3/3. In terms of biological role, converts HMG-CoA to mevalonate. The protein is 3-hydroxy-3-methylglutaryl-coenzyme A reductase (hmgA) of Methanocaldococcus jannaschii (strain ATCC 43067 / DSM 2661 / JAL-1 / JCM 10045 / NBRC 100440) (Methanococcus jannaschii).